Here is a 227-residue protein sequence, read N- to C-terminus: Probable septum site-determining protein MinC (227 aa).

This sequence belongs to the MinC family. Interacts with MinD and FtsZ.

Functionally, cell division inhibitor that blocks the formation of polar Z ring septums. Rapidly oscillates between the poles of the cell to destabilize FtsZ filaments that have formed before they mature into polar Z rings. Prevents FtsZ polymerization. The polypeptide is Probable septum site-determining protein MinC (Acetivibrio thermocellus (strain ATCC 27405 / DSM 1237 / JCM 9322 / NBRC 103400 / NCIMB 10682 / NRRL B-4536 / VPI 7372) (Clostridium thermocellum)).